A 419-amino-acid chain; its full sequence is UDP-N-acetylglucosamine 1-carboxyvinyltransferase (419 aa).

23–24 (KN) is a phosphoenolpyruvate binding site. Residue Arg92 participates in UDP-N-acetyl-alpha-D-glucosamine binding. Catalysis depends on Cys116, which acts as the Proton donor. The residue at position 116 (Cys116) is a 2-(S-cysteinyl)pyruvic acid O-phosphothioketal. UDP-N-acetyl-alpha-D-glucosamine contacts are provided by residues 121–125 (RPVDL), 161–164 (KVSV), Asp306, and Ile328.

It belongs to the EPSP synthase family. MurA subfamily.

Its subcellular location is the cytoplasm. It carries out the reaction phosphoenolpyruvate + UDP-N-acetyl-alpha-D-glucosamine = UDP-N-acetyl-3-O-(1-carboxyvinyl)-alpha-D-glucosamine + phosphate. The protein operates within cell wall biogenesis; peptidoglycan biosynthesis. Functionally, cell wall formation. Adds enolpyruvyl to UDP-N-acetylglucosamine. The protein is UDP-N-acetylglucosamine 1-carboxyvinyltransferase of Vibrio cholerae serotype O1 (strain ATCC 39541 / Classical Ogawa 395 / O395).